We begin with the raw amino-acid sequence, 630 residues long: MDICCKDIISDHSKKDIISDLPEALICHILSFLPIEDSALTSVLSKKWQHLFAFRPNLEFDDAVVYLNPDGERNETIFENFVDRVLSLQGDYPINKFSLTCRDFTDPTCVSRWISNVMERGVSDLDLRCIVYWDNGTMPPDIFVSKALVHLRIETGNGAFIDVEDVFLPNLKTLYLNKVLLRHSDNGFVKLITSCHVLEDLFIMNICWDGYLKRSLSSKTLKRLTFFCEDVHAVNPESVSFDTPNLVYFVYHDCVADKYKNMNFDSLVYASICLQMTSHQRTHASYEHLVGNATDFLLGISNVQILELFANTIEVLTFCCEQIPVFKNLVCLIIKTDQKAGWESLPVLLKNCPDLESLIFDGLHHNDTIKCEDVDGCLCKSSRGIPSCLSSSPVQFLTIWKFGEICDDYDDMEKQIELVMYFLETMPNLEEMKLFYDTQIYEDVISKLQMDLRRTLSLRSLFNARCYQPSCSGIIQRDDVHEEKPHYGSFLHQRSFSSSMILSQQHMMRSPSHFPLCSPFGVSTYRPMSTSHISGSDESGDVNHVAETLTDLVQQDTVIEVADAAIDSSIQLDFVQQIVHNVHSLTGLNWWASIVFTTFLIRGVTIPLMIECERWFSKRMVIKQCSFVNT.

The F-box domain occupies 15–63 (KDIISDLPEALICHILSFLPIEDSALTSVLSKKWQHLFAFRPNLEFDDA). LRR repeat units lie at residues 101–129 (CRDF…DLRC), 152–178 (RIET…YLNK), 180–205 (LLRH…FIMN), 228–253 (CEDV…VYHD), 300–325 (ISNV…QIPV), 337–362 (DQKA…IFDG), 406–436 (CDDY…KLFY), 437–465 (DTQI…FNAR), and 567–590 (DSSI…GLNW).

This is Putative F-box/LRR-repeat protein At3g49150 from Arabidopsis thaliana (Mouse-ear cress).